An 89-amino-acid polypeptide reads, in one-letter code: Small ribosomal subunit protein uS15 (89 aa).

The protein belongs to the universal ribosomal protein uS15 family. Part of the 30S ribosomal subunit. Forms a bridge to the 50S subunit in the 70S ribosome, contacting the 23S rRNA.

In terms of biological role, one of the primary rRNA binding proteins, it binds directly to 16S rRNA where it helps nucleate assembly of the platform of the 30S subunit by binding and bridging several RNA helices of the 16S rRNA. Functionally, forms an intersubunit bridge (bridge B4) with the 23S rRNA of the 50S subunit in the ribosome. The sequence is that of Small ribosomal subunit protein uS15 from Prochlorococcus marinus (strain MIT 9312).